A 283-amino-acid polypeptide reads, in one-letter code: uncharacterized protein (283 aa).

Positions 172–270 (EAIRDYIDER…ERSPSEYRRQ (99 aa)) constitute an HTH araC/xylS-type domain. 2 consecutive DNA-binding regions (H-T-H motif) follow at residues 189-210 (ESVAQAFYISPNYLSHLFQKTG) and 237-260 (VKEVAHACGFVDSNYFCRLFRKNT).

This is an uncharacterized protein from Escherichia coli (strain K12).